A 72-amino-acid chain; its full sequence is uncharacterized protein (72 aa).

The N-terminal stretch at 1–22 (MQSNFIFATLLVLLSLLTFTYA) is a signal peptide. Topologically, residues 23-28 (SGSSSM) are extracellular. The helical transmembrane segment at 29–49 (TSSSMPMFGGAIVAAFAFAIF) threads the bilayer. Topologically, residues 50–72 (SRLAQNFAPRAIFSLLPYHSVSC) are cytoplasmic.

It is found in the membrane. This is an uncharacterized protein from Dictyostelium discoideum (Social amoeba).